The sequence spans 195 residues: MKIGVLALQGAFREHINMLRTLGAEAVEVRKAEELAELSGLIIPGGESTTITKLLYTFGLAKPVKDLARNGMPVWGTCAGMICLAKELSGDISGVKTLELMDITVRRNAFGRQVDSFEAMLKVKALEGGDFPAVFIRAPLVEKTGQWVEVLAKLPDGTMVAVRENNLLATSFHPELSADNRFHRYFVQMAKDYKP.

An L-glutamine-binding site is contributed by 46–48; that stretch reads GES. Cys-78 acts as the Nucleophile in catalysis. L-glutamine contacts are provided by residues Arg-107 and 136–137; that span reads IR. Catalysis depends on charge relay system residues His-173 and Glu-175.

The protein belongs to the glutaminase PdxT/SNO family. In terms of assembly, in the presence of PdxS, forms a dodecamer of heterodimers. Only shows activity in the heterodimer.

The enzyme catalyses aldehydo-D-ribose 5-phosphate + D-glyceraldehyde 3-phosphate + L-glutamine = pyridoxal 5'-phosphate + L-glutamate + phosphate + 3 H2O + H(+). It carries out the reaction L-glutamine + H2O = L-glutamate + NH4(+). Its pathway is cofactor biosynthesis; pyridoxal 5'-phosphate biosynthesis. In terms of biological role, catalyzes the hydrolysis of glutamine to glutamate and ammonia as part of the biosynthesis of pyridoxal 5'-phosphate. The resulting ammonia molecule is channeled to the active site of PdxS. The protein is Pyridoxal 5'-phosphate synthase subunit PdxT of Dehalococcoides mccartyi (strain ATCC BAA-2266 / KCTC 15142 / 195) (Dehalococcoides ethenogenes (strain 195)).